A 324-amino-acid polypeptide reads, in one-letter code: BURP domain-containing protein 5 (324 aa).

The first 30 residues, 1–30 (MCATLCTLLDEISILILMLLLIQLEIRVSA), serve as a signal peptide directing secretion. A BURP domain is found at 109-323 (FFLETNLQSS…QPDVVVWTRR (215 aa)).

Expressed in panicles.

This is BURP domain-containing protein 5 (BURP5) from Oryza sativa subsp. japonica (Rice).